The primary structure comprises 379 residues: Glutamate 5-kinase (379 aa).

Lys-15 contacts ATP. The substrate site is built by Ser-54, Asp-144, and Asn-156. Thr-176–Asp-177 is a binding site for ATP. A PUA domain is found at Lys-282–Lys-360.

Belongs to the glutamate 5-kinase family.

The protein localises to the cytoplasm. The enzyme catalyses L-glutamate + ATP = L-glutamyl 5-phosphate + ADP. The protein operates within amino-acid biosynthesis; L-proline biosynthesis; L-glutamate 5-semialdehyde from L-glutamate: step 1/2. Functionally, catalyzes the transfer of a phosphate group to glutamate to form L-glutamate 5-phosphate. The protein is Glutamate 5-kinase of Anaeromyxobacter dehalogenans (strain 2CP-C).